Here is a 155-residue protein sequence, read N- to C-terminus: MSVTLDLQIACADSTGLPSETQFQQWLDTAVLPFQQEAEVTIRLVDEAESNELNLTYRGKDKPTNVLSFPFECPPEVEDFPLLGDLIICRQVVEKEALEQQKTLESHWAHMVIHGSLHLLGYDHIEDEEAEEMEALEKEFMQTLGFPDPYKDDEI.

Zn(2+)-binding residues include H114, H118, and H124.

The protein belongs to the endoribonuclease YbeY family. It depends on Zn(2+) as a cofactor.

Its subcellular location is the cytoplasm. In terms of biological role, single strand-specific metallo-endoribonuclease involved in late-stage 70S ribosome quality control and in maturation of the 3' terminus of the 16S rRNA. This is Endoribonuclease YbeY from Tolumonas auensis (strain DSM 9187 / NBRC 110442 / TA 4).